The primary structure comprises 427 residues: Histidine--tRNA ligase (427 aa).

It belongs to the class-II aminoacyl-tRNA synthetase family. Homodimer.

The protein resides in the cytoplasm. It catalyses the reaction tRNA(His) + L-histidine + ATP = L-histidyl-tRNA(His) + AMP + diphosphate + H(+). In Lacticaseibacillus casei (strain BL23) (Lactobacillus casei), this protein is Histidine--tRNA ligase.